The chain runs to 681 residues: Protein asunder (681 aa).

Residues P574–R619 form a disordered region. Positions L606 to R612 match the Nuclear localization signal (NLS) motif.

Belongs to the Integrator subunit 13 family. In terms of assembly, belongs to the multiprotein complex Integrator, at least composed of IntS1, IntS2, IntS3, IntS4, omd/IntS5, IntS6, defl/IntS7, IntS8, IntS9, IntS10, IntS11, IntS12, asun/IntS13, IntS14 and IntS15. The core complex associates with protein phosphatase 2A subunits mts/PP2A and Pp2A-29B, to form the Integrator-PP2A (INTAC) complex. In terms of processing, phosphorylated.

The protein localises to the nucleus. It is found in the cytoplasm. It localises to the perinuclear region. Its function is as follows. Component of the integrator complex, a multiprotein complex that terminates RNA polymerase II (Pol II) transcription in the promoter-proximal region of genes. The integrator complex provides a quality checkpoint during transcription elongation by driving premature transcription termination of transcripts that are unfavorably configured for transcriptional elongation: the complex terminates transcription by (1) catalyzing dephosphorylation of the C-terminal domain (CTD) of Pol II subunit Polr2A/Rbp1 and Spt5, and (2) degrading the exiting nascent RNA transcript via endonuclease activity. The integrator complex is also involved in the 3'-end processing of the U7 snRNA, and also the spliceosomal snRNAs U1, U2, U4 and U5. The polypeptide is Protein asunder (asun) (Drosophila virilis (Fruit fly)).